The chain runs to 1081 residues: Psi-producing oxygenase A (1081 aa).

Residues 105-446 (TKSFLNMLWN…DGAFNDDDLV (342 aa)) form a linoleate 8R-lipoxygenase region. A heme b-binding site is contributed by His202. Tyr374 is a catalytic residue. Position 377 (His377) interacts with heme b. A 9,12-octadecadienoate 8-hydroperoxide 8R-isomerase region spans residues 654 to 1081 (IFISSHAACM…GELPQLKEDF (428 aa)).

This sequence belongs to the peroxidase family. In terms of assembly, homotetramer. Heme b is required as a cofactor.

The catalysed reaction is (9Z,12Z)-octadecadienoate + O2 = (8R,9Z,12Z)-8-hydroperoxyoctadeca-9,12-dienoate. The enzyme catalyses (8R,9Z,12Z)-8-hydroperoxyoctadeca-9,12-dienoate = (5S,8R,9Z,12Z)-5,8-dihydroxyoctadeca-9,12-dienoate. In terms of biological role, bifunctional heme-containing enzyme that oxidizes linoleic acid to (8R,9Z,12Z)-8-hydroperoxyoctadeca-9,12-dienoate (within the N-terminal heme peroxidase domain), which is subsequently isomerized to (5S,8R,9Z,12Z)-5,8-dihydroxyoctadeca-9,12-dienoate (within the C-terminal P450 heme thiolate domain). Oxidized unsaturated fatty acids, so-called oxylipins, derived from endogenous fatty acids, influence the development of the asexual conidiophores and sexual cleistothecia and regulate the secondary metabolism. These substances were collectively named psi factors and are primarily a mixture of hydroxylated oleic, linoleic and alpha-linolenic acids. They are termed psi-beta, psi-alpha, and psi-gamma, respectively. The chain is Psi-producing oxygenase A (ppoA) from Emericella nidulans (Aspergillus nidulans).